Here is a 392-residue protein sequence, read N- to C-terminus: Caveolae-associated protein 1 (392 aa).

Position 1 is an N-acetylmethionine (methionine 1). A compositionally biased stretch (basic and acidic residues) spans methionine 1–glutamate 10. The segment at methionine 1–leucine 45 is disordered. Positions methionine 1 to lysine 100 are required for homotrimerization and for interaction with CAVIN2 and CAVIN3. Phosphoserine is present on residues serine 21 and serine 38. Threonine 40 carries the phosphothreonine modification. Phosphoserine is present on residues serine 42 and serine 48. The nuclear export signal stretch occupies residues valine 54–isoleucine 64. Positions leucine 55 to leucine 77 are leucine-zipper 1. Lysine 118 is covalently cross-linked (Glycyl lysine isopeptide (Lys-Gly) (interchain with G-Cter in SUMO2)). Serine 120 is modified (phosphoserine). Lysine 124 is covalently cross-linked (Glycyl lysine isopeptide (Lys-Gly) (interchain with G-Cter in SUMO2)). A nuclear localization signal region spans residues lysine 138–lysine 154. Tyrosine 158 carries the post-translational modification Phosphotyrosine. Residue lysine 163 forms a Glycyl lysine isopeptide (Lys-Gly) (interchain with G-Cter in SUMO1); alternate linkage. A Glycyl lysine isopeptide (Lys-Gly) (interchain with G-Cter in SUMO2); alternate cross-link involves residue lysine 163. Lysine 167 is covalently cross-linked (Glycyl lysine isopeptide (Lys-Gly) (interchain with G-Cter in SUMO2)). Positions leucine 168 to leucine 188 are leucine-zipper 2. Phosphoserine occurs at positions 169 and 171. Lysine 172 participates in a covalent cross-link: Glycyl lysine isopeptide (Lys-Gly) (interchain with G-Cter in SUMO2). Phosphoserine occurs at positions 173 and 177. Positions serine 173–lysine 183 are enriched in basic and acidic residues. Positions serine 173–aspartate 197 are disordered. Residues glutamate 184–aspartate 197 show a composition bias toward acidic residues. Threonine 198 carries the post-translational modification Phosphothreonine. The stretch at isoleucine 201–valine 284 forms a coiled coil. Serine 204 and serine 205 each carry phosphoserine. The tract at residues lysine 235–arginine 251 is nuclear localization signal. Residues leucine 259–leucine 299 form a leucine-zipper 3 region. Residue serine 302 is modified to Phosphoserine. The residue at position 304 (threonine 304) is a Phosphothreonine. Tyrosine 310 bears the Phosphotyrosine mark. Lysine 328 participates in a covalent cross-link: Glycyl lysine isopeptide (Lys-Gly) (interchain with G-Cter in SUMO2). The tract at residues glycine 347 to serine 367 is disordered. Phosphoserine is present on residues serine 367, serine 368, serine 381, serine 389, and serine 391.

This sequence belongs to the CAVIN family. As to quaternary structure, component of the CAVIN complex composed of CAVIN1, CAVIN2, CAVIN3 and CAVIN4. Homotrimer. Interacts with LIPE in the adipocyte cytoplasm. Interacts with RNA polymerase I subunit POLR1A/RPA1. Interacts with TTF1. Binds the 3' end of pre-rRNA. Interacts with transcription factor ZNF148. Interacts with CAV1, CAVIN2 and CAVIN3. Interacts with CAVIN4. In terms of processing, phosphorylated. Present in active and inactive forms. Changes in phosphorylation pattern may alter activity. Phosphorylation at Tyr-158 is essential for its function in the regulation of the ribosomal transcriptional activity. Post-translationally, monoubiquitinated. Expressed in the heart, stomach, adipose tissue and lung (at protein level). Expressed in testis, kidney, muscle, liver, spleen and brain.

Its subcellular location is the membrane. The protein resides in the caveola. It is found in the cell membrane. It localises to the microsome. The protein localises to the endoplasmic reticulum. Its subcellular location is the cytoplasm. The protein resides in the cytosol. It is found in the mitochondrion. It localises to the nucleus. Its function is as follows. Plays an important role in caveolae formation and organization. Essential for the formation of caveolae in all tissues. Core component of the CAVIN complex which is essential for recruitment of the complex to the caveolae in presence of calveolin-1 (CAV1). Essential for normal oligomerization of CAV1. Promotes ribosomal transcriptional activity in response to metabolic challenges in the adipocytes and plays an important role in the formation of the ribosomal transcriptional loop. Dissociates transcription complexes paused by DNA-bound TTF1, thereby releasing both RNA polymerase I and pre-RNA from the template. The caveolae biogenesis pathway is required for the secretion of proteins such as GASK1A. The sequence is that of Caveolae-associated protein 1 (Cavin1) from Mus musculus (Mouse).